Reading from the N-terminus, the 250-residue chain is Agamous-like MADS-box protein AGL8 homolog (250 aa).

In terms of domain architecture, MADS-box spans 3–57 (RGRVQLKRIENKINRQVTFSKRRSGLLKKAHEISVLCDAEVGLIVFSTKGKLFEY). Positions 88–178 (PGSWTLENAK…SKKVKEREKE (91 aa)) constitute a K-box domain. 2 disordered regions span residues 162–191 (QEQN…QNHE) and 206–241 (PHLG…TVMP). Basic and acidic residues predominate over residues 171-180 (KVKEREKEVE). Polar residues-rich tracts occupy residues 181 to 191 (QQNQWDQQNHE) and 226 to 240 (GNSS…NTVM).

Its subcellular location is the nucleus. Its function is as follows. Probable transcription factor. This is Agamous-like MADS-box protein AGL8 homolog (SCM1) from Solanum commersonii (Commerson's wild potato).